Consider the following 186-residue polypeptide: Negative modulator of initiation of replication (186 aa).

Belongs to the SeqA family. Homodimer. Polymerizes to form helical filaments.

The protein localises to the cytoplasm. Negative regulator of replication initiation, which contributes to regulation of DNA replication and ensures that replication initiation occurs exactly once per chromosome per cell cycle. Binds to pairs of hemimethylated GATC sequences in the oriC region, thus preventing assembly of replication proteins and re-initiation at newly replicated origins. Repression is relieved when the region becomes fully methylated. This chain is Negative modulator of initiation of replication, found in Glaesserella parasuis serovar 5 (strain SH0165) (Haemophilus parasuis).